We begin with the raw amino-acid sequence, 212 residues long: Thymidylate kinase (212 aa).

11–18 (GPDGAGKS) contributes to the ATP binding site.

Belongs to the thymidylate kinase family.

It catalyses the reaction dTMP + ATP = dTDP + ADP. Its function is as follows. Phosphorylation of dTMP to form dTDP in both de novo and salvage pathways of dTTP synthesis. In Streptococcus gordonii (strain Challis / ATCC 35105 / BCRC 15272 / CH1 / DL1 / V288), this protein is Thymidylate kinase.